Reading from the N-terminus, the 4466-residue chain is Dynein beta chain, ciliary (4466 aa).

The segment at 1-1813 (MADVVDPRLE…YANICDAQFK (1813 aa)) is stem. An ATP-binding site is contributed by 154 to 161 (AGQVKGKT). Coiled-coil stretches lie at residues 733-805 (TVLE…WTKQ), 1036-1056 (TLDQ…EADE), 1306-1337 (WLEI…AWDA), and 1443-1468 (LLKS…MTSK). AAA regions lie at residues 1814–2035 (YSYE…VLVV), 2095–2316 (KVVK…VRFK), 2422–2669 (ELDP…VFQG), and 2767–3016 (TYNE…ERRY). ATP-binding positions include 1852–1859 (GPAGTGKT), 2133–2140 (GNAGTGKS), 2460–2467 (GNAGLGKS), and 2805–2812 (GVGGSGKQ). 3 coiled-coil regions span residues 3033-3092 (SLLS…QVVG), 3263-3325 (EPKR…SRTI), and 3573-3642 (QERP…EEAK). Residues 3033-3325 (SLLSMKSKEL…QEAEATSRTI (293 aa)) are stalk. AAA stretches follow at residues 3409–3636 (LTDD…EISV) and 3846–4072 (VRNF…VLYN).

This sequence belongs to the dynein heavy chain family. Consists of at least two heavy chains (alpha and beta), three intermediate chains and several light chains.

The protein resides in the cell projection. It localises to the cilium. It is found in the flagellum. The protein localises to the cytoplasm. Its subcellular location is the cytoskeleton. The protein resides in the flagellum axoneme. Functionally, force generating protein of eukaryotic cilia and flagella. Produces force towards the minus ends of microtubules. Dynein has ATPase activity; the force-producing power stroke is thought to occur on release of ADP. The sequence is that of Dynein beta chain, ciliary from Tripneustes gratilla (Hawaian sea urchin).